A 149-amino-acid chain; its full sequence is MEVFGMAIITLVGEKLARPGVEFIYYGPAEPCRTCKLAGVCVGNLEPGRRYKILRVRSMPSHSCPLHEGKVRVVEVVEPSIEVAIEPRLAIAGSVIKLSFVDCSDPEKRDLFRPEGLFEGDSVKIIEILGDVECNGRTYKLVKVMRKKE.

This sequence belongs to the UPF0179 family.

This chain is UPF0179 protein TON_1048, found in Thermococcus onnurineus (strain NA1).